The following is an 894-amino-acid chain: Probable cytoplasmic aconitate hydratase (894 aa).

Residues Gln87 and 207–209 each bind substrate; that span reads DSH. The [4Fe-4S] cluster site is built by Cys438, Cys504, and Cys507. Substrate is bound by residues Arg537, Arg542, and 781-782; that span reads SR.

This sequence belongs to the aconitase/IPM isomerase family. [4Fe-4S] cluster is required as a cofactor.

It is found in the cytoplasm. The protein resides in the cytosol. It carries out the reaction citrate = D-threo-isocitrate. In terms of biological role, catalyzes the isomerization of citrate to isocitrate via cis-aconitate. The polypeptide is Probable cytoplasmic aconitate hydratase (aco1) (Dictyostelium discoideum (Social amoeba)).